A 467-amino-acid chain; its full sequence is Asparagine--tRNA ligase (467 aa).

This sequence belongs to the class-II aminoacyl-tRNA synthetase family. As to quaternary structure, homodimer.

It localises to the cytoplasm. The enzyme catalyses tRNA(Asn) + L-asparagine + ATP = L-asparaginyl-tRNA(Asn) + AMP + diphosphate + H(+). This is Asparagine--tRNA ligase from Haemophilus influenzae (strain ATCC 51907 / DSM 11121 / KW20 / Rd).